A 290-amino-acid polypeptide reads, in one-letter code: Oxaloacetate decarboxylase (290 aa).

Serine 53 contributes to the substrate binding site. Aspartate 91 provides a ligand contact to Mg(2+). Arginine 162 and histidine 238 together coordinate substrate.

Belongs to the isocitrate lyase/PEP mutase superfamily. Oxaloacetate decarboxylase family. In terms of assembly, homotetramer; dimer of dimers. Mg(2+) is required as a cofactor.

It carries out the reaction oxaloacetate + H(+) = pyruvate + CO2. Functionally, catalyzes the decarboxylation of oxaloacetate into pyruvate. Seems to play a role in maintaining cellular concentrations of bicarbonate and pyruvate. In Ectopseudomonas mendocina (strain ymp) (Pseudomonas mendocina), this protein is Oxaloacetate decarboxylase.